Reading from the N-terminus, the 334-residue chain is Ornithine carbamoyltransferase, catabolic (334 aa).

Carbamoyl phosphate is bound by residues 57–60, Gln84, Arg108, and 135–138; these read STRT and HPTQ. L-ornithine-binding positions include Asn169, Asp233, and 237 to 238; that span reads SM. Carbamoyl phosphate contacts are provided by residues 275-276 and Arg320; that span reads CL.

Belongs to the aspartate/ornithine carbamoyltransferase superfamily. OTCase family.

The protein resides in the cytoplasm. It carries out the reaction carbamoyl phosphate + L-ornithine = L-citrulline + phosphate + H(+). Its pathway is amino-acid degradation; L-arginine degradation via ADI pathway; carbamoyl phosphate from L-arginine: step 2/2. Reversibly catalyzes the transfer of the carbamoyl group from carbamoyl phosphate (CP) to the N(epsilon) atom of ornithine (ORN) to produce L-citrulline. The sequence is that of Ornithine carbamoyltransferase, catabolic (arcB) from Salmonella typhimurium (strain LT2 / SGSC1412 / ATCC 700720).